The sequence spans 1170 residues: Thrombospondin-2 (1170 aa).

The first 18 residues, 1–18 (MLWPLLLLALWAWPSAQA), serve as a signal peptide directing secretion. The Laminin G-like domain occupies 19 to 215 (GDQDEDTAFD…LQNVYLVFEN (197 aa)). The tract at residues 19 to 232 (GDQDEDTAFD…KKGCQQSQGA (214 aa)) is heparin-binding. N-linked (GlcNAc...) asparagine glycosylation is found at Asn-151, Asn-316, and Asn-330. The 58-residue stretch at 318–375 (SACWQDGRFFAENETWVVDSCTKCTCKKFKTVCHQISCPPATCADPWFVEGECCPSCV) folds into the VWFC domain. TSP type-1 domains are found at residues 379 to 429 (EEGW…GRCD), 435 to 490 (DGGW…PPCP), and 492 to 547 (DGRW…KSCP). 26 disulfide bridges follow: Cys-391/Cys-423, Cys-395/Cys-428, Cys-406/Cys-413, Cys-447/Cys-484, Cys-451/Cys-489, Cys-462/Cys-474, Cys-504/Cys-541, Cys-508/Cys-546, Cys-519/Cys-531, Cys-551/Cys-562, Cys-556/Cys-572, Cys-575/Cys-586, Cys-592/Cys-608, Cys-599/Cys-617, Cys-620/Cys-644, Cys-650/Cys-663, Cys-657/Cys-676, Cys-678/Cys-689, Cys-705/Cys-713, Cys-718/Cys-738, Cys-754/Cys-774, Cys-777/Cys-797, Cys-813/Cys-833, Cys-836/Cys-856, Cys-874/Cys-894, and Cys-910/Cys-930. Asn-455 is a glycosylation site (N-linked (GlcNAc...) asparagine). Positions 547–587 (PIDGCLSNPCFPGAECSSFPDGSWSCGSCPGGFLGNGTHCE) constitute an EGF-like 1 domain. Asn-582 carries an N-linked (GlcNAc...) asparagine glycan. The 45-residue stretch at 646-690 (PENPCKDKTHSCHRHAECIYLGHFSDPMYKCECQTGYAGDGLICG) folds into the EGF-like 2 domain. TSP type-3 repeat units follow at residues 691-726 (EDSD…NSGQ), 727-762 (EDFD…NPRQ), 763-785 (FDYD…NPAQ), 786-821 (IDTD…NTDQ), 822-844 (RDTD…NPDQ), 845-882 (TDVD…NANQ), 883-918 (ADHD…NPDQ), and 919-954 (EDSD…AISE). N-linked (GlcNAc...) asparagine glycosylation is present at Asn-708. The interval 731 to 750 (KDGIGDACDDDDDNDGVSDE) is disordered. The span at 737 to 747 (ACDDDDDNDGV) shows a compositional bias: acidic residues. Positions 841–944 (NPDQTDVDND…DNDSIPDIDD (104 aa)) are disordered. Acidic residues-rich tracts occupy residues 845–864 (TDVD…DIDE) and 894–903 (CDSDDDNDGI). Over residues 923–933 (GDRRGDACKDD) the composition is skewed to basic and acidic residues. The Cell attachment site signature appears at 926 to 928 (RGD). Acidic residues predominate over residues 934-944 (FDNDSIPDIDD). 2 N-linked (GlcNAc...) asparagine glycosylation sites follow: Asn-936 and Asn-1067. Cys-946 and Cys-1167 form a disulfide bridge. In terms of domain architecture, TSP C-terminal spans 958–1170 (RNFQMVHLDP…SDLKYECRDV (213 aa)).

The protein belongs to the thrombospondin family. In terms of assembly, homotrimer; disulfide-linked. Can bind to fibrinogen, fibronectin, laminin and type V collagen. Interacts (via the TSP type I repeats) with CD36; the interaction conveys an antiangiogenic effect. Interacts (via the TSP type I repeats) with HRG; the interaction blocks the antiangiogenic effect of THBS2 with CD36.

Adhesive glycoprotein that mediates cell-to-cell and cell-to-matrix interactions. Ligand for CD36 mediating antiangiogenic properties. This is Thrombospondin-2 (THBS2) from Bos taurus (Bovine).